Reading from the N-terminus, the 330-residue chain is GTPase Obg (330 aa).

An Obg domain is found at 1–159 (MNFIDEVKIY…MWIHLSLKLL (159 aa)). In terms of domain architecture, OBG-type G spans 160–327 (SDVGLVGLPN…IVKLALKIIK (168 aa)). GTP is bound by residues 166 to 173 (GLPNAGKS), 191 to 195 (FTTLV), 212 to 215 (DIPG), 279 to 282 (NKCD), and 308 to 310 (STY). Mg(2+) contacts are provided by Ser-173 and Thr-193.

It belongs to the TRAFAC class OBG-HflX-like GTPase superfamily. OBG GTPase family. As to quaternary structure, monomer. It depends on Mg(2+) as a cofactor.

It is found in the cytoplasm. Functionally, an essential GTPase which binds GTP, GDP and possibly (p)ppGpp with moderate affinity, with high nucleotide exchange rates and a fairly low GTP hydrolysis rate. Plays a role in control of the cell cycle, stress response, ribosome biogenesis and in those bacteria that undergo differentiation, in morphogenesis control. The protein is GTPase Obg of Rickettsia akari (strain Hartford).